A 284-amino-acid polypeptide reads, in one-letter code: Co-chaperone protein DjlA (284 aa).

At 1–6 (MHIFGK) the chain is on the periplasmic side. A helical transmembrane segment spans residues 7 to 30 (ILGAFFGLLLGGPFGLLFGLFIGH). Residues 31 to 284 (QFDKARRLSQ…DLIKKVKGFK (254 aa)) lie on the Cytoplasmic side of the membrane. One can recognise a J domain in the interval 218 to 284 (DAYKILDVSP…DLIKKVKGFK (67 aa)).

As to quaternary structure, homodimer.

Its subcellular location is the cell inner membrane. Regulatory DnaK co-chaperone. Direct interaction between DnaK and DjlA is needed for the induction of the wcaABCDE operon, involved in the synthesis of a colanic acid polysaccharide capsule, possibly through activation of the RcsB/RcsC phosphotransfer signaling pathway. The colanic acid capsule may help the bacterium survive conditions outside the host. The sequence is that of Co-chaperone protein DjlA from Vibrio parahaemolyticus serotype O3:K6 (strain RIMD 2210633).